The chain runs to 286 residues: Bifunctional protein FolD (286 aa).

Residues 165 to 167 and S190 contribute to the NADP(+) site; that span reads GRS.

This sequence belongs to the tetrahydrofolate dehydrogenase/cyclohydrolase family. Homodimer.

It catalyses the reaction (6R)-5,10-methylene-5,6,7,8-tetrahydrofolate + NADP(+) = (6R)-5,10-methenyltetrahydrofolate + NADPH. The enzyme catalyses (6R)-5,10-methenyltetrahydrofolate + H2O = (6R)-10-formyltetrahydrofolate + H(+). It participates in one-carbon metabolism; tetrahydrofolate interconversion. Its function is as follows. Catalyzes the oxidation of 5,10-methylenetetrahydrofolate to 5,10-methenyltetrahydrofolate and then the hydrolysis of 5,10-methenyltetrahydrofolate to 10-formyltetrahydrofolate. This Burkholderia lata (strain ATCC 17760 / DSM 23089 / LMG 22485 / NCIMB 9086 / R18194 / 383) protein is Bifunctional protein FolD.